Reading from the N-terminus, the 257-residue chain is MSLEIVPFVVAIPARFSASRLPGKPLRLLGGRPLIHRVAERALSAGAREVWVATDDVRIAEAVASLDGVHVAITANTHLSGSDRLAECARIAGWDPEVCVVNLQGDEPFAPAAGIRAVAALLHHSNADMATLATTIDKSEDLFNPNIVKLVCNAHGEALYFSRAPIPWNRDTFATTREPTPLGPWLRHIGLYACNAGFLQRFTTMQPGTLEQIESLEQLRVLEAGHRIAVRITPEHFPPGIDTPEDLAKAEKALEDV.

The protein belongs to the KdsB family.

The protein localises to the cytoplasm. It catalyses the reaction 3-deoxy-alpha-D-manno-oct-2-ulosonate + CTP = CMP-3-deoxy-beta-D-manno-octulosonate + diphosphate. It functions in the pathway nucleotide-sugar biosynthesis; CMP-3-deoxy-D-manno-octulosonate biosynthesis; CMP-3-deoxy-D-manno-octulosonate from 3-deoxy-D-manno-octulosonate and CTP: step 1/1. Its pathway is bacterial outer membrane biogenesis; lipopolysaccharide biosynthesis. Its function is as follows. Activates KDO (a required 8-carbon sugar) for incorporation into bacterial lipopolysaccharide in Gram-negative bacteria. The protein is 3-deoxy-manno-octulosonate cytidylyltransferase of Xylella fastidiosa (strain M12).